The sequence spans 92 residues: Probable Fe(2+)-trafficking protein (92 aa).

Belongs to the Fe(2+)-trafficking protein family.

Its function is as follows. Could be a mediator in iron transactions between iron acquisition and iron-requiring processes, such as synthesis and/or repair of Fe-S clusters in biosynthetic enzymes. This chain is Probable Fe(2+)-trafficking protein, found in Shewanella sp. (strain W3-18-1).